Reading from the N-terminus, the 434-residue chain is UDP-N-acetylmuramoylalanine--D-glutamate ligase (434 aa).

Residue 113–119 coordinates ATP; the sequence is GSNGKST.

This sequence belongs to the MurCDEF family.

It is found in the cytoplasm. The catalysed reaction is UDP-N-acetyl-alpha-D-muramoyl-L-alanine + D-glutamate + ATP = UDP-N-acetyl-alpha-D-muramoyl-L-alanyl-D-glutamate + ADP + phosphate + H(+). The protein operates within cell wall biogenesis; peptidoglycan biosynthesis. Cell wall formation. Catalyzes the addition of glutamate to the nucleotide precursor UDP-N-acetylmuramoyl-L-alanine (UMA). The sequence is that of UDP-N-acetylmuramoylalanine--D-glutamate ligase from Pasteurella multocida (strain Pm70).